Reading from the N-terminus, the 101-residue chain is Anti-sigma factor RshA (101 aa).

The segment at 1 to 20 (MSETEREDERWTPPIGPIDP) is disordered. Iron-sulfur cluster is bound by residues Cys-25, His-51, Cys-55, and Cys-58. The residue at position 96 (Thr-96) is a Phosphothreonine.

This sequence belongs to the zinc-associated anti-sigma factor (ZAS) superfamily. In terms of assembly, interacts with cognate ECF RNA polymerase sigma factor SigH under reducing conditions; the complex is disrupted under oxiding conditions or as temperatures rise. Binding inhibits the interaction of SigH with the RNA polymerase catalytic core. Requires iron-sulfur cluster as cofactor. In terms of processing, phosphorylated, probably by PknB. Phosphorylation decreases interaction with SigH, probably leading to increased SigH-mediated transcription.

In terms of biological role, a redox-regulated anti-sigma factor for cognate extracytoplasmic function (ECF) sigma factor SigH. ECF sigma factors are held in an inactive form by an anti-sigma factor. Overexpression leads to increased susceptibility to diamide. The polypeptide is Anti-sigma factor RshA (rshA) (Mycolicibacterium smegmatis (strain ATCC 700084 / mc(2)155) (Mycobacterium smegmatis)).